Reading from the N-terminus, the 294-residue chain is UPF0761 membrane protein MADE_1017605/MADE_1018330 (294 aa).

A run of 6 helical transmembrane segments spans residues 45–65 (LLSLVPFIMVTFTIMSAFPAF), 99–119 (ASQMSAIGILSLLVVALMLIS), 141–161 (FAIYWMVITLGPMLIGSSVVV), 182–202 (FLLSLVPSGAALLAFAILYMV), 213–233 (AFVGAIVATIAFEITKSGFAL), and 247–267 (ALAVVPILFLWVYLSWIIVLF).

This sequence belongs to the UPF0761 family.

The protein localises to the cell inner membrane. This is UPF0761 membrane protein MADE_1017605/MADE_1018330 from Alteromonas mediterranea (strain DSM 17117 / CIP 110805 / LMG 28347 / Deep ecotype).